A 203-amino-acid polypeptide reads, in one-letter code: Dual specificity phosphatase 29 (203 aa).

Residues 47-193 enclose the Tyrosine-protein phosphatase domain; that stretch reads HVNQVWPRIY…LRALDIALQE (147 aa). 137–144 is a binding site for substrate; that stretch reads HCVMGRSR. Cys-138 (phosphocysteine intermediate) is an active-site residue.

This sequence belongs to the protein-tyrosine phosphatase family. Non-receptor class dual specificity subfamily.

The protein resides in the cytoplasm. The protein localises to the nucleus. The catalysed reaction is O-phospho-L-tyrosyl-[protein] + H2O = L-tyrosyl-[protein] + phosphate. The enzyme catalyses O-phospho-L-seryl-[protein] + H2O = L-seryl-[protein] + phosphate. It carries out the reaction O-phospho-L-threonyl-[protein] + H2O = L-threonyl-[protein] + phosphate. Dual specificity phosphatase able to dephosphorylate phosphotyrosine, phosphoserine and phosphothreonine residues within the same substrate, with a preference for phosphotyrosine as a substrate. Involved in the modulation of AMPK and MAPK1/2 signaling pathways. This chain is Dual specificity phosphatase 29 (dusp29), found in Oryzias latipes (Japanese rice fish).